A 127-amino-acid chain; its full sequence is Mating pheromone 4 (127 aa).

The signal sequence occupies residues 1-16 (MKAIFIILAILMVTQA). A propeptide spanning residues 17–42 (FKMTSKVKSMNMSRNMSKNTSTLGTK) is cleaved from the precursor.

Its subcellular location is the secreted. Mating ciliate pheromones (or gamones) are diffusible extracellular communication signals that distinguish different intraspecific classes of cells commonly referred to as 'mating types'. They prepare the latter for conjugation by changing their cell surface properties. In Euplotoides octocarinatus (Freshwater ciliate), this protein is Mating pheromone 4 (PHR4).